A 1082-amino-acid chain; its full sequence is MEPAGLEQILKELLLPDTERIRRATEQLQTILRDPAALPALFDLLATATDSQIRQFAAVLTRRRLNNRWRRLAPEQRESLKSLVLTALQKETVHSVSVSLAQLSATIFRKEGLQGWPQFMNLLQHSTHSSHSPEKEVGLLLLSVVVSSQPEAFHAHQHELLQLLNETLSDVSFPGVLFYSLRTLTAIARYVRPDDVSLARMLVPKVVTALRTLIPLDEVKACEALEALDEMLETELPIINPHLSEVLTFCLEVAKNVALGEPLRVRVLCCLTFLVKVKSKALLKNRLVPPLLHALFPLMAAEPPMGQLDPEDQDSDDDDLEIGLMGETPKHFAVQVVDMLALHLPPEKLCPHVMPMLEEALRSEDPYQRKAGFLVLAVLSDGAGDHIRQRLLYPLLQIVCKGLDDPSQIVRNAALFALGQFSENLQPHISSYSEEVMPLLLSYLKSVPMGNTHHLAKACYALENFVENLGPKVQPYLPELMECMLQPLKNPSKARTKELAVSAIGAIATAAQDSLLPYFPTIMDLLREFLLTGHEDFHLVQIQSLETLGVLARALGESMKPLAEECCQLGLGLCIHIDDPDVRRCTYSLFAALSGLMGEGLGPYLPQITTLMLLSLRSTEGIVPQYDGISSFLLFDDDSEAEEEEELMDEDMEEEGDDSEISGYSVENAFFDEKEDTCTALGEISMNTCVAFLPFMDATFDEVYKLLECPHMNVRKSAYEALGQFCCALHKASQRSSSDPSSSPVLQTSLARVMPAYMQAVKVERERPVVMAVLESLTGVLRTCGSLALQPPGRLSELCNVLKAVLQKKTACQDAEEDDDEDDDQAEYDAMLLEHAGEAIPVLAATAGGHAFAPFFATFLPLLLCKTKQSCTVAEKSFAVGTLAESIQGLGTASAQFVSRLFPVLLNNAREADPEVRSNAIFGLGVLAEHGGCPAQDHFPKLLGLLLPLLARERHDRVRDNICGALARVLMASPVGKTEPQVLATLLRALPLKEDMEEWLTIGHLFSFLHQNNPEQVVDVASELLRICSLILPDNRIPPDTKAALLLLLTFLAKQHTDSFHTALGSLPNDKAQELQAMMGLT.

The residue at position 1 (M1) is an N-acetylmethionine. Residues 24-90 form the Importin N-terminal domain; sequence ATEQLQTILR…KSLVLTALQK (67 aa). HEAT repeat units lie at residues 348–385, 390–427, 431–471, 475–513, 896–933, and 937–975; these read KLCP…GAGD, RLLY…NLQP, SYSE…NLGP, PYLP…AAQD, QFVS…HGGC, and DHFP…ASPV.

This sequence belongs to the importin beta family. As to quaternary structure, found in a cytosolic complex with ASF1 (ASF1A or ASF1B) and histones H3 and H4.

The protein localises to the cytoplasm. Its subcellular location is the nucleus. Functionally, nuclear transport receptor that mediates nuclear import of proteins, such as histones, RPS3A, TNP2 and VDR. Serves as receptor for nuclear localization signals (NLS) in cargo substrates. Is thought to mediate docking of the importin/substrate complex to the nuclear pore complex (NPC) through binding to nucleoporin and the complex is subsequently translocated through the pore by an energy requiring, Ran-dependent mechanism. At the nucleoplasmic side of the NPC, Ran binds to the importin, the importin/substrate complex dissociates and importin is re-exported from the nucleus to the cytoplasm where GTP hydrolysis releases Ran. The directionality of nuclear import is thought to be conferred by an asymmetric distribution of the GTP- and GDP-bound forms of Ran between the cytoplasm and nucleus. Mediates the nuclear import of the histone H3-H4 dimer when in complex with ASF1 (ASF1A or ASF1B). Mediates the ligand-independent nuclear import of vitamin D receptor (VDR). This is Importin-4 (Ipo4) from Mus musculus (Mouse).